The following is a 221-amino-acid chain: Cytidylate kinase (221 aa).

Residue 11–19 (GPTASGKGT) participates in ATP binding.

It belongs to the cytidylate kinase family. Type 1 subfamily.

It is found in the cytoplasm. It catalyses the reaction CMP + ATP = CDP + ADP. The enzyme catalyses dCMP + ATP = dCDP + ADP. This chain is Cytidylate kinase, found in Cupriavidus pinatubonensis (strain JMP 134 / LMG 1197) (Cupriavidus necator (strain JMP 134)).